The chain runs to 177 residues: ATP synthase subunit delta (177 aa).

Belongs to the ATPase delta chain family. F-type ATPases have 2 components, F(1) - the catalytic core - and F(0) - the membrane proton channel. F(1) has five subunits: alpha(3), beta(3), gamma(1), delta(1), epsilon(1). F(0) has three main subunits: a(1), b(2) and c(10-14). The alpha and beta chains form an alternating ring which encloses part of the gamma chain. F(1) is attached to F(0) by a central stalk formed by the gamma and epsilon chains, while a peripheral stalk is formed by the delta and b chains.

It localises to the cell membrane. Functionally, f(1)F(0) ATP synthase produces ATP from ADP in the presence of a proton or sodium gradient. F-type ATPases consist of two structural domains, F(1) containing the extramembraneous catalytic core and F(0) containing the membrane proton channel, linked together by a central stalk and a peripheral stalk. During catalysis, ATP synthesis in the catalytic domain of F(1) is coupled via a rotary mechanism of the central stalk subunits to proton translocation. This protein is part of the stalk that links CF(0) to CF(1). It either transmits conformational changes from CF(0) to CF(1) or is implicated in proton conduction. The protein is ATP synthase subunit delta of Carboxydothermus hydrogenoformans (strain ATCC BAA-161 / DSM 6008 / Z-2901).